The following is a 454-amino-acid chain: Aspartate aminotransferase P2, mitochondrial (454 aa).

Residues 1–49 constitute a mitochondrion transit peptide; the sequence is SSLLSIPSLSLQYNDKLKVGGNSLRFSKEQSNTFSNAKSSCRISMVAAV. L-aspartate-binding residues include glycine 86, tryptophan 182, and asparagine 235. Lysine 299 is subject to N6-(pyridoxal phosphate)lysine. Residue arginine 428 participates in L-aspartate binding.

Belongs to the class-I pyridoxal-phosphate-dependent aminotransferase family. As to quaternary structure, homodimer. Pyridoxal 5'-phosphate is required as a cofactor.

It localises to the mitochondrion matrix. The enzyme catalyses L-aspartate + 2-oxoglutarate = oxaloacetate + L-glutamate. Important for the metabolism of amino acids and Krebs-cycle related organic acids. In plants, it is involved in nitrogen metabolism and in aspects of carbon and energy metabolism. In Lupinus angustifolius (Narrow-leaved blue lupine), this protein is Aspartate aminotransferase P2, mitochondrial.